The following is an 829-amino-acid chain: Spindle-defective protein 2 (829 aa).

4 disordered regions span residues 1-29 (MNEDAPMDLVDDRFADQSIQDEPVDDGES), 41-104 (EDED…SNDI), 183-294 (KKDV…TTSD), and 326-471 (RKKR…NGHM). The segment covering 54–82 (FRLENRYKPSLHTPRELPTIREENREDVR) has biased composition (basic and acidic residues). Residues 83 to 93 (SNTSSRVNTRP) are compositionally biased toward polar residues. Basic and acidic residues predominate over residues 183–216 (KKDVTRKQENVRPGKMMPEKVNDENEPKSRRFSP). 2 stretches are compositionally biased toward polar residues: residues 217 to 230 (ERNTFTTSPMNSTK) and 266 to 294 (PQRTSGTPKTYESRHPTNAYTPNSATTSD). A coiled-coil region spans residues 314 to 332 (VDINLLTALENARKKRDRP). 2 stretches are compositionally biased toward low complexity: residues 361–370 (SMTSIVSSST) and 384–408 (NSATSTDLTNSNTSNFTNNTSRVST). Polar residues-rich tracts occupy residues 409–439 (AKNDFSRSSRQRNGFSDSSVSTIIPNMNSMT) and 448–463 (SVSSVRTISRASSTMT).

It is found in the cytoplasm. Its subcellular location is the cytoskeleton. The protein resides in the microtubule organizing center. The protein localises to the centrosome. It localises to the centriole. In terms of biological role, required both for centrosome duplication and maturation. Required for pericentriolar material (PCM) recruitment. This is Spindle-defective protein 2 from Caenorhabditis briggsae.